The chain runs to 929 residues: MNPYQRASPRTASPASNLQTNPTRTNNPRHSADRNSYFDNPPYNDRGSEDGEDDMASRGDHMAETDQRQYQKINQVIQNFFTKSALSIVSSRVILPTSFNKNGDIRQNKWFNVILDDSDELQLRLTEWKTMDAMAGQHPPLYIEVYLDISGLGHKQSLVVHDEDGKRWDVAAALNAAQPTSRASSRPARPTQIVIERWKIYVGDIDSVHPSDLTEPLPNVYKKAVVLFRGLYANLRLLPAFKYNKSMAKQPANHTSLKLNYRILNGASERPQLDTLSLPLCPSTDPITETAHIGSTNSPIGPLCISVEYRDACEFSVEDSESLLSDQFMGLDDTYLEQKPRAAAPVPGSLPVDKLNTQETPDVGQAYGSLSTFHQVGPPTGTSPISALRAARDMPSSSPIETPPQKLPPNHRTAQGSKSSLRSNDTSSFQRRTSVSFQPFKAGSLSSSPAPGPAGPASPSSSLGRPTSAFGRNINIVPNSLNQPRNRTSLNALPQAALRAPSLPNDNAIASSASSSPKPAPITRYSSSFGHRRGKFSTGGSKTEEDALSSGKGSATSSLQRGSDTLNDGEGGSSGEMRSEDDNISDFLKLLEAKKDLKSFNRSDSSTRDATMRKTTAQLGKYQRMRDSHAQLSDSVSSSTMLHRSSSSSSRQLSSVPAMIHGTSISTASSPGKPISPHTPHTPAIPSRLSANSIIEYDQPHRSRNHRSRSRSGRTARGQGPENLEEQSEVEDDAAGIDIPLSPRPWNYQRRSSSVAQQNRNLPEDEPDMFGVRAASLPVEEGDRARDLHRITSTDLTSSGLFAQTESLASASRDNQAPDDGDSRDDLPRASSTSNTPAKRGTYSSNLRGRGGFFSQGSSTTGSTGGTSSTERQSRYNFNSRAANLDDDEPLLFQMSEIGAGGSRRSLEEARGGSSTGSARGRNSPWGGR.

5 disordered regions span residues 1–66 (MNPY…AETD), 342–487 (AAAP…PRNR), 503–581 (LPND…RSED), 600–770 (FNRS…PDMF), and 808–929 (LASA…WGGR). Residues 8–29 (SPRTASPASNLQTNPTRTNNPR) are compositionally biased toward polar residues. Over residues 55–66 (MASRGDHMAETD) the composition is skewed to basic and acidic residues. Composition is skewed to polar residues over residues 368–385 (GSLSTFHQVGPPTGTSPI), 412–437 (RTAQGSKSSLRSNDTSSFQRRTSVSF), 476–487 (IVPNSLNQPRNR), and 551–566 (GKGSATSSLQRGSDTL). Residues 600–612 (FNRSDSSTRDATM) show a composition bias toward basic and acidic residues. The segment covering 635-656 (SVSSSTMLHRSSSSSSRQLSSV) has biased composition (low complexity). Positions 702–714 (RSRNHRSRSRSGR) are enriched in basic residues. Residues 723–735 (NLEEQSEVEDDAA) are compositionally biased toward acidic residues. Composition is skewed to polar residues over residues 749–761 (QRRSSSVAQQNRN) and 830–847 (ASSTSNTPAKRGTYSSNL). Composition is skewed to low complexity over residues 855-871 (SQGSSTTGSTGGTSSTE) and 912-929 (GGSSTGSARGRNSPWGGR).

It belongs to the ATG13 family. Fungi subfamily. As to quaternary structure, interacts with ATG1 to form the ATG1-ATG13 kinase complex.

Its subcellular location is the cytoplasm. The protein localises to the preautophagosomal structure. In terms of biological role, activates the ATG1 kinase in a nutritional condition dependent manner through the TOR pathway, leading to autophagy. Also involved in cytoplasm to vacuole transport (Cvt) and more specifically in Cvt vesicle formation. Seems to play a role in the switching machinery regulating the conversion between the Cvt pathway and autophagy. Finally, ATG13 is also required for glycogen storage during stationary phase. The protein is Autophagy-related protein 13 (ATG13) of Phaeosphaeria nodorum (strain SN15 / ATCC MYA-4574 / FGSC 10173) (Glume blotch fungus).